Here is a 193-residue protein sequence, read N- to C-terminus: Thymidine kinase (193 aa).

Residues 9–16 (STMNAGKS) and 87–90 (DEAQ) contribute to the ATP site. The active-site Proton acceptor is Glu-88. The Zn(2+) site is built by Cys-145, Cys-147, Cys-182, and His-185.

It belongs to the thymidine kinase family. In terms of assembly, homotetramer.

It is found in the cytoplasm. The catalysed reaction is thymidine + ATP = dTMP + ADP + H(+). The sequence is that of Thymidine kinase from Haemophilus influenzae (strain ATCC 51907 / DSM 11121 / KW20 / Rd).